The chain runs to 193 residues: Interleukin-18 (193 aa).

The propeptide occupies 1 to 36 (MAANLIEDNCINLVKMKFVNNTLYFKAESDEGLESD).

Belongs to the IL-1 family. In terms of assembly, forms a ternary complex with ligand-binding receptor subunit IL18R1 and signaling receptor subunit IL18RAP at the plasma membrane. Mature IL18 first binds to IL18R1 forming a low affinity binary complex, which then interacts with IL18RAP to form a high affinity ternary complex that signals inside the cell. Interacts with cargo receptor TMED10; the interaction mediates the translocation from the cytoplasm into the ERGIC (endoplasmic reticulum-Golgi intermediate compartment) and thereby secretion. The pro-IL-18 precursor is processed by CASP1, CASP4 or CASP5 to yield its mature, active form. The pro-IL-18 precursor features autoinhibitory interactions between the propeptide and the post-cleavage-site region, preventing recognition by the IL18R1 receptor. Processing by CASP1, CASP4 or CASP5 induces conformational changes to generate critical receptor-binding sites. The mature form is then secreted and released in the extracellular milieu by passing through the gasdermin-D (GSDMD) pore. In contrast, cleavage by CASP3 inactivates IL18.

The protein resides in the cytoplasm. Its subcellular location is the cytosol. The protein localises to the secreted. Functionally, pro-inflammatory cytokine primarily involved in epithelial barrier repair, polarized T-helper 1 (Th1) cell and natural killer (NK) cell immune responses. Upon binding to IL18R1 and IL18RAP, forms a signaling ternary complex which activates NF-kappa-B, triggering synthesis of inflammatory mediators. Synergizes with IL12/interleukin-12 to induce IFNG synthesis from T-helper 1 (Th1) cells and natural killer (NK) cells. Involved in transduction of inflammation downstream of pyroptosis: its mature form is specifically released in the extracellular milieu by passing through the gasdermin-D (GSDMD) pore. This chain is Interleukin-18 (IL18), found in Canis lupus familiaris (Dog).